We begin with the raw amino-acid sequence, 161 residues long: Ribonuclease P protein component (161 aa).

A disordered region spans residues 1 to 20 (MPDELRAEKSFPSKPYDSLK).

This sequence belongs to the RnpA family. In terms of assembly, consists of a catalytic RNA component (M1 or rnpB) and a protein subunit.

The enzyme catalyses Endonucleolytic cleavage of RNA, removing 5'-extranucleotides from tRNA precursor.. In terms of biological role, RNaseP catalyzes the removal of the 5'-leader sequence from pre-tRNA to produce the mature 5'-terminus. It can also cleave other RNA substrates such as 4.5S RNA. The protein component plays an auxiliary but essential role in vivo by binding to the 5'-leader sequence and broadening the substrate specificity of the ribozyme. This chain is Ribonuclease P protein component, found in Helicobacter pylori (strain P12).